The sequence spans 365 residues: DNA polymerase IV (365 aa).

The region spanning 14 to 198 is the UmuC domain; the sequence is IIHIDMDAFF…LPIEKFHGVG (185 aa). Mg(2+)-binding residues include Asp-18 and Asp-116. Glu-117 is an active-site residue.

It belongs to the DNA polymerase type-Y family. In terms of assembly, monomer. The cofactor is Mg(2+).

Its subcellular location is the cytoplasm. The enzyme catalyses DNA(n) + a 2'-deoxyribonucleoside 5'-triphosphate = DNA(n+1) + diphosphate. Functionally, poorly processive, error-prone DNA polymerase involved in untargeted mutagenesis. Copies undamaged DNA at stalled replication forks, which arise in vivo from mismatched or misaligned primer ends. These misaligned primers can be extended by PolIV. Exhibits no 3'-5' exonuclease (proofreading) activity. May be involved in translesional synthesis, in conjunction with the beta clamp from PolIII. This is DNA polymerase IV from Streptococcus pyogenes serotype M3 (strain ATCC BAA-595 / MGAS315).